We begin with the raw amino-acid sequence, 155 residues long: HTH-type transcriptional regulator IscR (155 aa).

The HTH rrf2-type domain maps to 2–136; the sequence is KLSTKGRYAM…HQTRLSDIIK (135 aa). The segment at residues 30–53 is a DNA-binding region (H-T-H motif); sequence LAEVSKRQDISLPYLEQLFVKLRR. The interval 141 to 145 is heme regulatory motif (HRM); the sequence is PCPAV. Cys-142 is a binding site for [2Fe-2S] cluster.

[2Fe-2S] cluster serves as cofactor.

Functionally, regulates the transcription of several operons and genes involved in the biogenesis of Fe-S clusters and Fe-S-containing proteins. Functions as a transcriptional repressor of genes involved in iron metabolism by directly binding to the promoter region of genes preceded by the Iron-Rhodo-box motif. Binds to iscR and hemP promoter regions independently of an Fe-S cluster, but their transcriptional repression is Fe-S cluster-dependent. Seems to activate some target genes in a Fe-S cluster-independent manner. Negatively regulates its own transcription in the presence of iron only. This chain is HTH-type transcriptional regulator IscR, found in Cereibacter sphaeroides (strain ATCC 17023 / DSM 158 / JCM 6121 / CCUG 31486 / LMG 2827 / NBRC 12203 / NCIMB 8253 / ATH 2.4.1.) (Rhodobacter sphaeroides).